Reading from the N-terminus, the 259-residue chain is Adenosylcobinamide-GDP ribazoletransferase (259 aa).

The next 6 helical transmembrane spans lie at 37–57 (ASRY…LVYS), 58–78 (VMLH…ASVL), 118–138 (ALAL…LALF), 143–163 (VSLA…SFIF), 195–215 (AAIS…LGLL), and 237–257 (LGAT…IVGA).

This sequence belongs to the CobS family. Requires Mg(2+) as cofactor.

It localises to the cell inner membrane. It carries out the reaction alpha-ribazole + adenosylcob(III)inamide-GDP = adenosylcob(III)alamin + GMP + H(+). The enzyme catalyses alpha-ribazole 5'-phosphate + adenosylcob(III)inamide-GDP = adenosylcob(III)alamin 5'-phosphate + GMP + H(+). It functions in the pathway cofactor biosynthesis; adenosylcobalamin biosynthesis; adenosylcobalamin from cob(II)yrinate a,c-diamide: step 7/7. Joins adenosylcobinamide-GDP and alpha-ribazole to generate adenosylcobalamin (Ado-cobalamin). Also synthesizes adenosylcobalamin 5'-phosphate from adenosylcobinamide-GDP and alpha-ribazole 5'-phosphate. In Shewanella piezotolerans (strain WP3 / JCM 13877), this protein is Adenosylcobinamide-GDP ribazoletransferase.